The chain runs to 57 residues: THCLTTAAGAPVARFSTVAGERGAADAERDIRRLFSYGDAARRLGVNHQHIPVNAPR.

Tyr37 lines the heme pocket.

Homodimer. The cofactor is heme.

The catalysed reaction is 2 H2O2 = O2 + 2 H2O. Decomposes hydrogen peroxide into water and oxygen; serves to protect cells from the toxic effects of hydrogen peroxide. In Comamonas terrigena, this protein is Catalase-1.